We begin with the raw amino-acid sequence, 583 residues long: Radixin (583 aa).

Residues 5–295 (INVRVTTMDA…GNHELYMRRR (291 aa)) form the FERM domain. A 1,2-diacyl-sn-glycero-3-phospho-(1D-myo-inositol) is bound by residues 60–63 (KLNK) and Lys-278. Disordered regions lie at residues 310-336 (REEK…AEKE) and 436-527 (KKKE…VKKQ). Basic and acidic residues-rich tracts occupy residues 436–447 (KKKEEEASEWQH) and 455–464 (DLEKTKEELK). The segment covering 469–480 (APPPPPPPPVIP) has biased composition (pro residues). Composition is skewed to basic and acidic residues over residues 483-492 (ENEHDEHDEN) and 506-525 (MNHR…ERVK).

The protein localises to the cell membrane. It is found in the cytoplasm. The protein resides in the cytoskeleton. In terms of biological role, probably plays a crucial role in the binding of the barbed end of actin filaments to the plasma membrane. The polypeptide is Radixin (RDX) (Gallus gallus (Chicken)).